The primary structure comprises 276 residues: NAD kinase (276 aa).

D67 functions as the Proton acceptor in the catalytic mechanism. Residues 67 to 68 (DG), R72, 136 to 137 (ND), K147, R164, D166, 177 to 182 (TAYALS), A201, and Q235 contribute to the NAD(+) site.

It belongs to the NAD kinase family. It depends on a divalent metal cation as a cofactor.

It is found in the cytoplasm. The enzyme catalyses NAD(+) + ATP = ADP + NADP(+) + H(+). Its function is as follows. Involved in the regulation of the intracellular balance of NAD and NADP, and is a key enzyme in the biosynthesis of NADP. Catalyzes specifically the phosphorylation on 2'-hydroxyl of the adenosine moiety of NAD to yield NADP. The polypeptide is NAD kinase (Thermococcus sibiricus (strain DSM 12597 / MM 739)).